The sequence spans 154 residues: 6,7-dimethyl-8-ribityllumazine synthase (154 aa).

Residues Phe26, 60 to 62 (ALE), and 84 to 86 (CII) each bind 5-amino-6-(D-ribitylamino)uracil. 89-90 (ET) is a (2S)-2-hydroxy-3-oxobutyl phosphate binding site. The active-site Proton donor is His92. Asn117 contacts 5-amino-6-(D-ribitylamino)uracil. Residue Arg131 participates in (2S)-2-hydroxy-3-oxobutyl phosphate binding.

The protein belongs to the DMRL synthase family.

The enzyme catalyses (2S)-2-hydroxy-3-oxobutyl phosphate + 5-amino-6-(D-ribitylamino)uracil = 6,7-dimethyl-8-(1-D-ribityl)lumazine + phosphate + 2 H2O + H(+). It functions in the pathway cofactor biosynthesis; riboflavin biosynthesis; riboflavin from 2-hydroxy-3-oxobutyl phosphate and 5-amino-6-(D-ribitylamino)uracil: step 1/2. In terms of biological role, catalyzes the formation of 6,7-dimethyl-8-ribityllumazine by condensation of 5-amino-6-(D-ribitylamino)uracil with 3,4-dihydroxy-2-butanone 4-phosphate. This is the penultimate step in the biosynthesis of riboflavin. The chain is 6,7-dimethyl-8-ribityllumazine synthase from Paracidovorax citrulli (strain AAC00-1) (Acidovorax citrulli).